The primary structure comprises 748 residues: Subtilisin-like protease (748 aa).

An N-terminal signal peptide occupies residues 1 to 24 (MMKMELRLLVSLIFILCSISMLAA). An Inhibitor I9 domain is found at 37 to 115 (TYIVHVKKSE…ARPERTLELH (79 aa)). In terms of domain architecture, Peptidase S8 spans 122–600 (FLGLKQGQGL…AGHVNPVKAN (479 aa)). Residues D147 and H206 each act as charge relay system in the active site. In terms of domain architecture, PA spans 365–454 (PLVYPGSFGY…VEVSYAAGLT (90 aa)). N-linked (GlcNAc...) asparagine glycosylation is found at N376, N380, and N405. The active-site Charge relay system is S533. N-linked (GlcNAc...) asparagine glycosylation is found at N675 and N722.

The protein belongs to the peptidase S8 family.

The protein localises to the secreted. The protein resides in the extracellular space. Its subcellular location is the apoplast. Functionally, required for arbuscular mycorrhiza (AM) development during AM symbiosis with AM fungi (e.g. Glomeromycota intraradices). This chain is Subtilisin-like protease, found in Medicago truncatula (Barrel medic).